Here is a 433-residue protein sequence, read N- to C-terminus: Glutamate-1-semialdehyde 2,1-aminomutase (433 aa).

Residue K271 is modified to N6-(pyridoxal phosphate)lysine.

Belongs to the class-III pyridoxal-phosphate-dependent aminotransferase family. HemL subfamily. As to quaternary structure, homodimer. Pyridoxal 5'-phosphate serves as cofactor.

The protein localises to the cytoplasm. The enzyme catalyses (S)-4-amino-5-oxopentanoate = 5-aminolevulinate. It participates in porphyrin-containing compound metabolism; protoporphyrin-IX biosynthesis; 5-aminolevulinate from L-glutamyl-tRNA(Glu): step 2/2. Its pathway is porphyrin-containing compound metabolism; chlorophyll biosynthesis. The sequence is that of Glutamate-1-semialdehyde 2,1-aminomutase from Prochlorococcus marinus (strain AS9601).